The primary structure comprises 759 residues: Na(+)/H(+) exchanger beta (759 aa).

At 1–14 (MPAFSCAFPGCRRD) the chain is on the cytoplasmic side. A helical membrane pass occupies residues 15 to 34 (LLVIVLVVFVGIGLPIEASA). Residues 35 to 75 (PAYQSHGTEGSHLTNITNTKKAFPVLAVNYEHVRKPFEIAL) lie on the Extracellular side of the membrane. A glycan (N-linked (GlcNAc...) asparagine) is linked at N49. Residues 76-95 (WILLALLMKLGFHLIPRLSA) traverse the membrane as a helical segment. Over 96–97 (VV) the chain is Cytoplasmic. Residues 98–117 (PESCLLIVVGLLVGGLIKVI) form a helical membrane-spanning segment. Topologically, residues 118–122 (GEEPP) are extracellular. The chain crosses the membrane as a helical span at residues 123–142 (VLDSQLFFLCLLPPIILDAG). At 143–149 (YFLPIRP) the chain is on the cytoplasmic side. The chain crosses the membrane as a helical span at residues 150–169 (FTENVGTILVFAVIGTLWNA). Over 170–195 (FFMGGLLYALCQIESVGLSGVDLLAC) the chain is Extracellular. The helical transmembrane segment at 196–214 (LLFGSIVSAVDPVAVLAVF) threads the bilayer. The Cytoplasmic portion of the chain corresponds to 215-225 (EEIHINELVHI). Residues 226–244 (LVFGESLLNDAVTVVLYNL) form a helical membrane-spanning segment. The Extracellular portion of the chain corresponds to 245-261 (FEEFSKVGTVTVLDVFL). The chain crosses the membrane as a helical span at residues 262–282 (GVVCFFVVSLGGVLVGAIYGF). Residues 283-311 (LAAFTSRFTSHTRVIEPLFVFLYSYMAYL) are Cytoplasmic-facing. Residues 312–330 (SSEMFHLSGIMALIACGVV) form a helical membrane-spanning segment. Residues 331-352 (MRPYVEANISHKSYTTIKYFLK) are Extracellular-facing. An N-linked (GlcNAc...) asparagine glycan is attached at N338. A helical transmembrane segment spans residues 353–372 (MWSSVSETLIFIFLGVSTVA). The Cytoplasmic portion of the chain corresponds to 373-376 (GPHA). A helical membrane pass occupies residues 377–398 (WNWTFVITTVILCLVSRVLGVI). Residues 399-446 (GLTFIINKFRIVKLTKKDQFIVAYGGLRGAIAFSLGYLLSNSHQMRNL) are Extracellular-facing. Residues 447 to 467 (FLTAIITVIFFTVFVQGMTIR) traverse the membrane as a helical segment. At 468-759 (PLVELLAVKK…KEDDDPFMSC (292 aa)) the chain is on the cytoplasmic side. A phosphoserine; by PKA mark is found at S641 and S648. The interval 681 to 759 (FPTVHFEQPS…KEDDDPFMSC (79 aa)) is disordered. Basic and acidic residues predominate over residues 707-719 (VPKRPSLKADIEG).

The protein belongs to the monovalent cation:proton antiporter 1 (CPA1) transporter (TC 2.A.36) family. Post-translationally, activated by cAMP, protein kinase A and protein kinase C.

It localises to the basolateral cell membrane. Its function is as follows. Involved in pH regulation to eliminate acids generated by active metabolism or to counter adverse environmental conditions. Major proton extruding system driven by the inward sodium ion chemical gradient. This Oncorhynchus mykiss (Rainbow trout) protein is Na(+)/H(+) exchanger beta.